The primary structure comprises 183 residues: Peptide deformylase (183 aa).

Fe cation-binding residues include cysteine 110 and histidine 153. The active site involves glutamate 154. Histidine 157 provides a ligand contact to Fe cation.

Belongs to the polypeptide deformylase family. Fe(2+) serves as cofactor.

It catalyses the reaction N-terminal N-formyl-L-methionyl-[peptide] + H2O = N-terminal L-methionyl-[peptide] + formate. In terms of biological role, removes the formyl group from the N-terminal Met of newly synthesized proteins. Requires at least a dipeptide for an efficient rate of reaction. N-terminal L-methionine is a prerequisite for activity but the enzyme has broad specificity at other positions. The polypeptide is Peptide deformylase (Shouchella clausii (strain KSM-K16) (Alkalihalobacillus clausii)).